The chain runs to 476 residues: Probable cytosolic Fe-S cluster assembly factor GI11683 (476 aa).

[4Fe-4S] cluster contacts are provided by C23, C68, C71, C74, C187, C243, C395, and C399.

It belongs to the NARF family.

Its function is as follows. Component of the cytosolic iron-sulfur (Fe/S) protein assembly machinery. Required for maturation of extramitochondrial Fe/S proteins. The chain is Probable cytosolic Fe-S cluster assembly factor GI11683 from Drosophila mojavensis (Fruit fly).